Reading from the N-terminus, the 121-residue chain is Large ribosomal subunit protein bL20 (121 aa).

The protein belongs to the bacterial ribosomal protein bL20 family.

Binds directly to 23S ribosomal RNA and is necessary for the in vitro assembly process of the 50S ribosomal subunit. It is not involved in the protein synthesizing functions of that subunit. The polypeptide is Large ribosomal subunit protein bL20 (rplT) (Chlamydia pneumoniae (Chlamydophila pneumoniae)).